A 249-amino-acid chain; its full sequence is Electron transfer flavoprotein subunit beta (249 aa).

Belongs to the ETF beta-subunit/FixA family. In terms of assembly, heterodimer of an alpha and a beta subunit. The cofactor is FAD. AMP serves as cofactor.

The electron transfer flavoprotein serves as a specific electron acceptor for other dehydrogenases. It transfers the electrons to the main respiratory chain via ETF-ubiquinone oxidoreductase (ETF dehydrogenase). In Bradyrhizobium diazoefficiens (strain JCM 10833 / BCRC 13528 / IAM 13628 / NBRC 14792 / USDA 110), this protein is Electron transfer flavoprotein subunit beta (etfB).